The primary structure comprises 65 residues: Large ribosomal subunit protein bL35 (65 aa).

Basic residues predominate over residues 1–11 (MPKIKTRRSAA). Positions 1–25 (MPKIKTRRSAAKRFSVTGSGKFRRR) are disordered.

It belongs to the bacterial ribosomal protein bL35 family.

This chain is Large ribosomal subunit protein bL35, found in Nitratidesulfovibrio vulgaris (strain ATCC 29579 / DSM 644 / CCUG 34227 / NCIMB 8303 / VKM B-1760 / Hildenborough) (Desulfovibrio vulgaris).